The sequence spans 1303 residues: Alpha,alpha-trehalose-phosphate synthase [UDP-forming] 2 (1303 aa).

Disordered stretches follow at residues 1 to 48 (MTVV…NNTT) and 205 to 251 (LQRR…FRGK). The segment covering 212-221 (SSRGGSLRGS) has biased composition (low complexity).

It in the N-terminal section; belongs to the glycosyltransferase 20 family. This sequence in the C-terminal section; belongs to the gob-1 trehalose phosphatase family.

It carries out the reaction D-glucose 6-phosphate + UDP-alpha-D-glucose = alpha,alpha-trehalose 6-phosphate + UDP + H(+). Catalyzes the production of trehalose from glucose-6-phosphate and UDP-alpha-D-glucose in a 2 step process. The chain is Alpha,alpha-trehalose-phosphate synthase [UDP-forming] 2 (tps-2) from Aphelenchoides avenae (Mycophagous nematode worm).